Reading from the N-terminus, the 787-residue chain is Phenylalanine--tRNA ligase beta subunit (787 aa).

One can recognise a tRNA-binding domain in the interval 39 to 149; the sequence is APAFAGVVIA…EDAPVGTNIR (111 aa). The region spanning 400-475 is the B5 domain; the sequence is PEVKQVGLRL…RVYGYENIPD (76 aa). D453, D459, E462, and E463 together coordinate Mg(2+). The region spanning 694-786 is the FDX-ACB domain; that stretch reads SKFQPVRRDL…AATAAGARLR (93 aa).

This sequence belongs to the phenylalanyl-tRNA synthetase beta subunit family. Type 1 subfamily. Tetramer of two alpha and two beta subunits. The cofactor is Mg(2+).

It is found in the cytoplasm. It catalyses the reaction tRNA(Phe) + L-phenylalanine + ATP = L-phenylalanyl-tRNA(Phe) + AMP + diphosphate + H(+). The chain is Phenylalanine--tRNA ligase beta subunit (pheT) from Neisseria meningitidis serogroup A / serotype 4A (strain DSM 15465 / Z2491).